Consider the following 297-residue polypeptide: Probable endonuclease 4 (297 aa).

Zn(2+) is bound by residues histidine 69, histidine 110, glutamate 145, aspartate 179, histidine 182, histidine 214, aspartate 227, histidine 229, and glutamate 259.

This sequence belongs to the AP endonuclease 2 family. Requires Zn(2+) as cofactor.

The enzyme catalyses Endonucleolytic cleavage to 5'-phosphooligonucleotide end-products.. Its function is as follows. Endonuclease IV plays a role in DNA repair. It cleaves phosphodiester bonds at apurinic or apyrimidinic (AP) sites, generating a 3'-hydroxyl group and a 5'-terminal sugar phosphate. This is Probable endonuclease 4 from Listeria welshimeri serovar 6b (strain ATCC 35897 / DSM 20650 / CCUG 15529 / CIP 8149 / NCTC 11857 / SLCC 5334 / V8).